The primary structure comprises 4490 residues: Dynein axonemal heavy chain 8 (4490 aa).

At Ser-674 the chain carries Phosphoserine. AAA stretches follow at residues 1808–2030 (YQNE…VLRT), 2090–2309 (NAVA…KLNL), 2416–2669 (YYPT…IWQG), and 2780–3034 (QFNE…YRRR). Residues 1846–1853 (GPAGTGKT) and 2128–2135 (GPSGSGKT) each bind ATP. The tract at residues 3049–3346 (YKNIYAEKVK…MDLLNDADTC (298 aa)) is stalk. Coiled-coil stretches lie at residues 3072–3164 (DKLM…ALNT), 3290–3354 (LKAN…QAAS), and 3594–3630 (RRVI…DNLL). 2 AAA regions span residues 3432–3662 (LVDP…EVSE) and 3877–4091 (ARKY…FIQN).

The protein belongs to the dynein heavy chain family. In terms of assembly, consists of at least two heavy chains and a number of intermediate and light chains. As to expression, expressed in spermatozoa (at protein level). Not detected in airway epithelial cells (at protein level).

The protein resides in the cytoplasm. It is found in the cytoskeleton. Its subcellular location is the flagellum axoneme. Force generating protein component of the outer dynein arms (ODAs) in the sperm flagellum. Produces force towards the minus ends of microtubules. Dynein has ATPase activity; the force-producing power stroke is thought to occur on release of ADP. Involved in sperm motility; implicated in sperm flagellar assembly. The protein is Dynein axonemal heavy chain 8 of Homo sapiens (Human).